Consider the following 628-residue polypeptide: Monoterpene synthase like 2, chloroplastic (628 aa).

Mg(2+)-binding residues include Asp379, Asp383, and Asp531. The short motif at 379 to 383 (DDIYD) is the DDXXD motif element.

The protein belongs to the terpene synthase family. Tpsd subfamily. Requires Mg(2+) as cofactor. Mn(2+) is required as a cofactor.

Its subcellular location is the plastid. The protein resides in the chloroplast. Its pathway is terpene metabolism; oleoresin biosynthesis. It functions in the pathway secondary metabolite biosynthesis; terpenoid biosynthesis. Monoterpene synthase (TPS) involved in the biosynthesis of monoterpene natural products included in conifer oleoresin secretions and volatile emissions; these compounds contribute to biotic and abiotic stress defense against herbivores and pathogens. The protein is Monoterpene synthase like 2, chloroplastic of Pinus banksiana (Jack pine).